A 353-amino-acid polypeptide reads, in one-letter code: D-alanine--D-alanine ligase (353 aa).

The region spanning 135 to 344 (KMVFAQAGLA…FPQLVDRLVQ (210 aa)) is the ATP-grasp domain. An ATP-binding site is contributed by 171–226 (EAQLDYPMFVKPANLGSSVGISKVRTRDELEKALDLAAEYDRRLIVEAGVTAREVE). The Mg(2+) site is built by Asp-297, Glu-311, and Asn-313.

It belongs to the D-alanine--D-alanine ligase family. Mg(2+) is required as a cofactor. The cofactor is Mn(2+).

The protein resides in the cytoplasm. It carries out the reaction 2 D-alanine + ATP = D-alanyl-D-alanine + ADP + phosphate + H(+). It participates in cell wall biogenesis; peptidoglycan biosynthesis. In terms of biological role, cell wall formation. This is D-alanine--D-alanine ligase from Picosynechococcus sp. (strain ATCC 27264 / PCC 7002 / PR-6) (Agmenellum quadruplicatum).